The chain runs to 215 residues: S-crystallin 2 (215 aa).

One can recognise a GST N-terminal domain in the interval 2–80; it reads PSYTLNYFNH…YLAREFGFHG (79 aa). Residues 82–215 enclose the GST C-terminal domain; it reads NNMEMARVEY…YLKKRSSTEF (134 aa).

Belongs to the GST superfamily. As to expression, lens.

Its function is as follows. S-crystallins are structural components of squids and octopi eye lens. Contains relatively little if any GST activity. The chain is S-crystallin 2 from Enteroctopus dofleini (North Pacific giant octopus).